The primary structure comprises 165 residues: 5-formyltetrahydrofolate cyclo-ligase (165 aa).

An ATP-binding site is contributed by 4 to 8 (KNSLR). The substrate site is built by Ile51 and Glu56. 116 to 124 (RIGFGKGYY) lines the ATP pocket. Asp125 is a binding site for Mg(2+). Arg126 and Trp154 together coordinate ATP. Asp155 serves as a coordination point for Mg(2+).

This sequence belongs to the 5-formyltetrahydrofolate cyclo-ligase family. In terms of assembly, monomer or homodimer. Requires Mg(2+) as cofactor.

The protein resides in the cytoplasm. It catalyses the reaction (6S)-5-formyl-5,6,7,8-tetrahydrofolate + ATP = (6R)-5,10-methenyltetrahydrofolate + ADP + phosphate. Its function is as follows. Involved in folate metabolism. Catalyzes the irreversible conversion of 5-formyltetrahydrofolate (5-FTHF) to yield 5,10-methenyltetrahydrofolate. This is 5-formyltetrahydrofolate cyclo-ligase from Mycoplasma genitalium (strain ATCC 33530 / DSM 19775 / NCTC 10195 / G37) (Mycoplasmoides genitalium).